The chain runs to 221 residues: Ribosomal RNA small subunit methyltransferase G (221 aa).

Residues glycine 83, phenylalanine 88, 132-133 (LE), and arginine 146 each bind S-adenosyl-L-methionine.

It belongs to the methyltransferase superfamily. RNA methyltransferase RsmG family.

It localises to the cytoplasm. The catalysed reaction is guanosine(527) in 16S rRNA + S-adenosyl-L-methionine = N(7)-methylguanosine(527) in 16S rRNA + S-adenosyl-L-homocysteine. Functionally, specifically methylates the N7 position of guanine in position 527 of 16S rRNA. In Zymomonas mobilis subsp. mobilis (strain ATCC 31821 / ZM4 / CP4), this protein is Ribosomal RNA small subunit methyltransferase G.